The following is an 87-amino-acid chain: Small ribosomal subunit protein bS20 (87 aa).

The interval 1–25 is disordered; sequence MANIKSAKKRAVQSEKRRKHNASRR.

This sequence belongs to the bacterial ribosomal protein bS20 family.

Its function is as follows. Binds directly to 16S ribosomal RNA. The protein is Small ribosomal subunit protein bS20 of Yersinia pseudotuberculosis serotype O:1b (strain IP 31758).